A 189-amino-acid polypeptide reads, in one-letter code: UPF0301 protein CTA_0231 (189 aa).

The protein belongs to the UPF0301 (AlgH) family.

This chain is UPF0301 protein CTA_0231, found in Chlamydia trachomatis serovar A (strain ATCC VR-571B / DSM 19440 / HAR-13).